Consider the following 110-residue polypeptide: Large ribosomal subunit protein uL24 (110 aa).

Belongs to the universal ribosomal protein uL24 family. As to quaternary structure, part of the 50S ribosomal subunit.

One of two assembly initiator proteins, it binds directly to the 5'-end of the 23S rRNA, where it nucleates assembly of the 50S subunit. In terms of biological role, one of the proteins that surrounds the polypeptide exit tunnel on the outside of the subunit. In Chloroflexus aggregans (strain MD-66 / DSM 9485), this protein is Large ribosomal subunit protein uL24.